A 679-amino-acid chain; its full sequence is MLYPQHFDVIVVGGGHAGTEAALAAARMGCKTLLLSHNIETLGQMSCNPSIGGIGKGHLVKEVDALGGAMAAATDEGGIQFRILNSSKGPAVRATRAQADRLLYKAAIRRRLENQPNLWLFQQAVDDLMVEGDRVVGAVTQAGIKFRAKTVVLTAGTFLDGKIHVGLNNYAAGRAGDPPAVRLSARLKELKLPQGRLKTGTPPRLDGRSIDFSKCGEQPGDGMPGGMSPVMPVFSFMGRVEQHPPQMSCWTTHTNERTHEIIRSGFDRSPMFTGKIEGVGPRYCPSVEDKINRFADKDSHQIFLEPEGLTTNEYYPNGISTSLPFDIQYALVRSMAGLENAHILRPGYAIEYDYFDPQQLKSSFETRAIGGLFFAGQINGTTGYEEAAAQGLFAGVNAALQAGAQTSWQQETWVPGRDEAYLGVLVDDLITKGVTEPYRMFTSRAEFRLQLREDNADMRLTETGRRLGLVDDARWEAFSRKREAVSRETERLRSLWVSPKNLTATESERVLGKSIEHEYSLADLLRRPDVNYANLMSLEGGKYASAELNIPVSRETPAVPLPEAVFAAVVIEQVEIVAKYAGYIDRQIEEVGRAAHYENLKLPLELDYLQVSALSFEARQKLSKHRPETLGQASRLSGITPAAISLLLVHLKKSNFKGFAAAGKVTAPSESGDVQQGVI.

13–18 (GGGHAG) is an FAD binding site. 280 to 294 (GPRYCPSVEDKINRF) contacts NAD(+).

The protein belongs to the MnmG family. As to quaternary structure, homodimer. Heterotetramer of two MnmE and two MnmG subunits. Requires FAD as cofactor.

It is found in the cytoplasm. Its function is as follows. NAD-binding protein involved in the addition of a carboxymethylaminomethyl (cmnm) group at the wobble position (U34) of certain tRNAs, forming tRNA-cmnm(5)s(2)U34. In Albidiferax ferrireducens (strain ATCC BAA-621 / DSM 15236 / T118) (Rhodoferax ferrireducens), this protein is tRNA uridine 5-carboxymethylaminomethyl modification enzyme MnmG.